Reading from the N-terminus, the 325-residue chain is Zinc-type alcohol dehydrogenase-like protein C337.11 (325 aa).

The protein belongs to the zinc-containing alcohol dehydrogenase family. Quinone oxidoreductase subfamily.

Its subcellular location is the cytoplasm. It is found in the nucleus. In Schizosaccharomyces pombe (strain 972 / ATCC 24843) (Fission yeast), this protein is Zinc-type alcohol dehydrogenase-like protein C337.11.